Here is a 293-residue protein sequence, read N- to C-terminus: ATP synthase subunit a (293 aa).

A run of 6 helical transmembrane segments spans residues 40–60 (DSLF…WLAA), 98–118 (FVAP…ALDL), 151–171 (DLNV…YYGI), 188–208 (FHAH…LNLI), 225–245 (MFAG…WTGF), and 264–284 (AIFH…LTLV).

It belongs to the ATPase A chain family. In terms of assembly, F-type ATPases have 2 components, CF(1) - the catalytic core - and CF(0) - the membrane proton channel. CF(1) has five subunits: alpha(3), beta(3), gamma(1), delta(1), epsilon(1). CF(0) has three main subunits: a(1), b(2) and c(9-12). The alpha and beta chains form an alternating ring which encloses part of the gamma chain. CF(1) is attached to CF(0) by a central stalk formed by the gamma and epsilon chains, while a peripheral stalk is formed by the delta and b chains.

Its subcellular location is the cell inner membrane. Functionally, key component of the proton channel; it plays a direct role in the translocation of protons across the membrane. The chain is ATP synthase subunit a from Bordetella avium (strain 197N).